The following is a 201-amino-acid chain: Imidazole glycerol phosphate synthase subunit HisH (201 aa).

The Glutamine amidotransferase type-1 domain occupies 1–201 (MIIVIDYDAG…ILKKFVDLCD (201 aa)). The active-site Nucleophile is C79. Residues H181 and E183 contribute to the active site.

Heterodimer of HisH and HisF.

The protein resides in the cytoplasm. It catalyses the reaction 5-[(5-phospho-1-deoxy-D-ribulos-1-ylimino)methylamino]-1-(5-phospho-beta-D-ribosyl)imidazole-4-carboxamide + L-glutamine = D-erythro-1-(imidazol-4-yl)glycerol 3-phosphate + 5-amino-1-(5-phospho-beta-D-ribosyl)imidazole-4-carboxamide + L-glutamate + H(+). The catalysed reaction is L-glutamine + H2O = L-glutamate + NH4(+). Its pathway is amino-acid biosynthesis; L-histidine biosynthesis; L-histidine from 5-phospho-alpha-D-ribose 1-diphosphate: step 5/9. Its function is as follows. IGPS catalyzes the conversion of PRFAR and glutamine to IGP, AICAR and glutamate. The HisH subunit catalyzes the hydrolysis of glutamine to glutamate and ammonia as part of the synthesis of IGP and AICAR. The resulting ammonia molecule is channeled to the active site of HisF. This chain is Imidazole glycerol phosphate synthase subunit HisH, found in Streptococcus mutans serotype c (strain ATCC 700610 / UA159).